Here is a 192-residue protein sequence, read N- to C-terminus: MADHALNLDDFLSRFQLLRPQPSRHALNQRQAAVLVPIVRRPQPGLLLTQRSPLLRKHAGQVAFPGGAVDNTDATLIAAALREAQEEVAIPPEAVEVIGVLPPVDSVTGFQVTPVVGIIPPNLHYHASQDEVSAVFEMPLAEALRLGRYHPLDIHRRGNDHRVWLSWYQHYFVWGMTAGIIRELALQIGARP.

The Nudix hydrolase domain occupies 29–160 (QRQAAVLVPI…PLDIHRRGND (132 aa)). A Nudix box motif is present at residues 67 to 89 (GAVDNTDATLIAAALREAQEEVA). Residues E83 and E87 each coordinate Mg(2+).

Belongs to the Nudix hydrolase family. PCD1 subfamily. Mn(2+) serves as cofactor. Mg(2+) is required as a cofactor.

Probably mediates the hydrolysis of some nucleoside diphosphate derivatives. This is an uncharacterized protein from Klebsiella pneumoniae (strain 342).